Consider the following 130-residue polypeptide: Small ribosomal subunit protein uS11 (130 aa).

Belongs to the universal ribosomal protein uS11 family. Part of the 30S ribosomal subunit. Interacts with proteins S7 and S18. Binds to IF-3.

Functionally, located on the platform of the 30S subunit, it bridges several disparate RNA helices of the 16S rRNA. Forms part of the Shine-Dalgarno cleft in the 70S ribosome. The sequence is that of Small ribosomal subunit protein uS11 from Shewanella frigidimarina (strain NCIMB 400).